The primary structure comprises 192 residues: Sarcoplasmic calcium-binding protein, alpha-B and -A chains (192 aa).

Ala-1 carries the post-translational modification N-acetylalanine. 4 EF-hand domains span residues Trp-4–Ile-39, Ile-56–Gly-91, Ala-100–Phe-135, and Ala-136–Phe-171. Residues Asp-17, Asp-19, Asp-21, Asp-28, Asp-69, Asn-71, Asp-73, Glu-75, Glu-80, Asp-113, Asn-115, Asp-117, Lys-119, and Glu-124 each coordinate Ca(2+).

SCPs from crayfish, lobster, and shrimp are polymorphic dimers; three isotypes (alpha-alpha, alpha-beta, and beta-beta) have been identified.

In terms of biological role, like parvalbumins, SCPs seem to be more abundant in fast contracting muscles, but no functional relationship can be established from this distribution. This is Sarcoplasmic calcium-binding protein, alpha-B and -A chains from Penaeus sp. (Penoeid shrimp).